Here is an 821-residue protein sequence, read N- to C-terminus: V-type proton ATPase subunit a3 (821 aa).

A2 carries the post-translational modification N-acetylalanine. Residues 2 to 421 (AESGGGGGCC…ANPGVFTIVT (420 aa)) lie on the Cytoplasmic side of the membrane. Residues 97 to 144 (KENDIDLDDVEVKLGELEAELVEINANNDKLQRSYNELMEYKLVLQKA) adopt a coiled-coil conformation. Residue S174 is modified to Phosphoserine. The chain crosses the membrane as a helical span at residues 422-442 (FPFLFAVMFGDWGHGICILLA). The Vacuolar segment spans residues 443–469 (TMYLILKEKKLASQKLGDIMEMAFGGR). The helical transmembrane segment at 470-490 (YVILMMSLFSIYTGLIYNEFF) threads the bilayer. The Cytoplasmic segment spans residues 491–548 (SIPFPLFAPSAYDCRDVSCSEATTIGLIKVRDTYPFGLDPVWHGSRSELPFLNSLKMK). Residues 549–569 (MSILLGVSQMNLGIIMSYFNA) traverse the membrane as a helical segment. Topologically, residues 570 to 581 (RFFKSSVNIWFQ) are vacuolar. A helical transmembrane segment spans residues 582 to 602 (FIPQMIFLNSLFGYLSVLIII). Over 603–640 (KWCTGSQADLYHVMIYMFLSPMDELGENQLFPHQKTLQ) the chain is Cytoplasmic. The chain crosses the membrane as a helical span at residues 641–661 (LVLLFLALVSVPCMLLPKPFI). The Vacuolar portion of the chain corresponds to 662 to 758 (LKKQHEARHQ…LLLAWGYNNP (97 aa)). Residues 759–779 (LILIVGVLVFIFATVGVLLVM) traverse the membrane as a helical segment. Over 780–821 (ETLSAFLHALRLHWVEFQNKFYEGDGYKFAPFTFIFTANEDE) the chain is Cytoplasmic.

It belongs to the V-ATPase 116 kDa subunit family. In terms of assembly, V-ATPase is a heteromultimeric enzyme composed of a peripheral catalytic V1 complex (components A to H) attached to an integral membrane V0 proton pore complex (components: a, c, c'', d and e). Expressed in etiolated seedlings hypocotyls.

Its subcellular location is the vacuole membrane. Essential component of the vacuolar proton pump (V-ATPase), a multimeric enzyme that catalyzes the translocation of protons across the membranes. Required for assembly and activity of the V-ATPase. Involved in vacuolar nutrient storage (e.g. accumulation and storage of nitrate) and in tolerance to some toxic ions (e.g. zinc ions sequestration in vacuoles). This is V-type proton ATPase subunit a3 (VHA-a3) from Arabidopsis thaliana (Mouse-ear cress).